A 1017-amino-acid chain; its full sequence is GPI ethanolamine phosphate transferase 3 (1017 aa).

The chain crosses the membrane as a helical span at residues 34–54 (FYIILLVFIAILQFISIAFFT). Residues Asn66, Asn71, Asn100, Asn182, and Asn203 are each glycosylated (N-linked (GlcNAc...) asparagine). The helical transmembrane segment at 347–367 (VSSLALLMGQPIPFNNLGWPI) threads the bilayer. A glycan (N-linked (GlcNAc...) asparagine) is linked at Asn411. Transmembrane regions (helical) follow at residues 457–477 (LLAT…SIVV), 484–504 (FVPG…GIFY), 515–535 (FWGT…ITIF), 558–578 (IAVM…FTIW), 582–602 (IVAF…VFLP), and 644–664 (LGGY…MITI). N-linked (GlcNAc...) asparagine glycosylation is found at Asn681 and Asn682. The helical transmembrane segment at 685–705 (WWVLGLCFLMIFILPACITGY) threads the bilayer. A glycan (N-linked (GlcNAc...) asparagine) is linked at Asn707. Residues 715–735 (AAPIWINVFLKGILGLNFVYW) form a helical membrane-spanning segment. An N-linked (GlcNAc...) asparagine glycan is attached at Asn742. Transmembrane regions (helical) follow at residues 765 to 785 (IIAG…PLCI), 806 to 826 (NIYG…ILLF), 829 to 849 (PLAQ…LEII), 903 to 923 (IAII…VALL), 947 to 967 (GILL…VTHF), and 981 to 1001 (FIFA…GTIA).

The protein belongs to the PIGG/PIGN/PIGO family. PIGO subfamily. In terms of processing, glycosylated.

It localises to the endoplasmic reticulum membrane. The protein operates within glycolipid biosynthesis; glycosylphosphatidylinositol-anchor biosynthesis. Its function is as follows. Involved in glycosylphosphatidylinositol-anchor biosynthesis. Transfers ethanolamine phosphate to the GPI third mannose which links the GPI-anchor to the C-terminus of the proteins by an amide bond. Involved in cell wall biosynthesis. The protein is GPI ethanolamine phosphate transferase 3 (GPI13) of Saccharomyces cerevisiae (strain ATCC 204508 / S288c) (Baker's yeast).